The chain runs to 133 residues: DNA-directed RNA polymerases I and III subunit RPAC2 (133 aa).

Met-1 is subject to N-acetylmethionine.

The protein belongs to the archaeal Rpo11/eukaryotic RPB11/RPC19 RNA polymerase subunit family. Component of the RNA polymerase I and RNA polymerase III complexes consisting of at least 13 and 17 subunits, respectively. Pol I complex consists of a ten-subunit catalytic core composed of POLR1A/RPA1, POLR1B/RPA2, POLR1C/RPAC1, POLR1D/RPAC2, POLR1H/RPA12, POLR2E/RPABC1, POLR2F/RPABC2, POLR2H/RPABC3, POLR2K/RPABC4 and POLR2L/RPABC5; a mobile stalk subunit POLR1F/RPA43 protruding from the core and additional subunits homologous to general transcription factors POLR1E/RPA49 and POLR1G/RPA34. Part of Pol I pre-initiation complex (PIC), in which Pol I core assembles with RRN3 and promoter-bound UTBF and SL1/TIF-IB complex. Pol III complex consists of a ten-subunit catalytic core composed of POLR3A/RPC1, POLR3B/RPC2, POLR1C/RPAC1, POLR1D/RPAC2, POLR3K/RPC10, POLR2E/RPABC1, POLR2F/RPABC2, POLR2H/RPABC3, POLR2K/RPABC4 and POLR2L/RPABC5; a mobile stalk composed of two subunits POLR3H/RPC8 and CRCP/RPC9, protruding from the core and functioning primarily in transcription initiation; and additional subunits homologous to general transcription factors of the RNA polymerase II machinery, POLR3C/RPC3-POLR3F/RPC6-POLR3G/RPC7 heterotrimer required for transcription initiation and POLR3D/RPC4-POLR3E/RPC5 heterodimer involved in both transcription initiation and termination.

It is found in the nucleus. Its subcellular location is the nucleolus. DNA-dependent RNA polymerase catalyzes the transcription of DNA into RNA using the four ribonucleoside triphosphates as substrates. Common component of RNA polymerases I and III which synthesize ribosomal RNA precursors and short non-coding RNAs including 5S rRNA, snRNAs, tRNAs and miRNAs, respectively. The chain is DNA-directed RNA polymerases I and III subunit RPAC2 from Homo sapiens (Human).